The primary structure comprises 522 residues: DNA damage-binding protein CMR1 (522 aa).

The disordered stretch occupies residues 38–100 (AGVLEKSRAP…DNQLLKMGSP (63 aa)). The span at 54 to 63 (TTNTRATKSA) shows a compositional bias: polar residues. At serine 64 the chain carries Phosphoserine. At threonine 69 the chain carries Phosphothreonine. Positions 75-84 (LRGESADDVK) are enriched in basic and acidic residues. WD repeat units follow at residues 183-224 (ITYE…LADS), 239-281 (LFTK…EVLT), 287-327 (DDSL…SEYN), 331-371 (LADK…KKPE), 388-427 (DSRLSVSAVSYSPTDGTLVCNGYDDTIRLFDVKSRDHLSA), 442-481 (GRWTSILKARFKPNKNVFAIANMKRAIDIYNSEGQQLAHL), and 482-521 (PTATVPAVISWHPLRNWIAGGNSSGKIFLFTDDSGTIKQE). Serine 224 carries the phosphoserine modification.

It belongs to the WD repeat DDB2/WDR76 family.

It localises to the cytoplasm. It is found in the nucleus. Functionally, DNA-binding protein that binds to both single- and double-stranded DNA. Binds preferentially to UV-damaged DNA in vitro. May be involved in DNA-metabolic processes. The chain is DNA damage-binding protein CMR1 from Saccharomyces cerevisiae (strain ATCC 204508 / S288c) (Baker's yeast).